Reading from the N-terminus, the 418-residue chain is Gamma-glutamyl phosphate reductase (418 aa).

Belongs to the gamma-glutamyl phosphate reductase family.

The protein resides in the cytoplasm. It carries out the reaction L-glutamate 5-semialdehyde + phosphate + NADP(+) = L-glutamyl 5-phosphate + NADPH + H(+). Its pathway is amino-acid biosynthesis; L-proline biosynthesis; L-glutamate 5-semialdehyde from L-glutamate: step 2/2. Its function is as follows. Catalyzes the NADPH-dependent reduction of L-glutamate 5-phosphate into L-glutamate 5-semialdehyde and phosphate. The product spontaneously undergoes cyclization to form 1-pyrroline-5-carboxylate. In Chlorobium chlorochromatii (strain CaD3), this protein is Gamma-glutamyl phosphate reductase.